The sequence spans 104 residues: Pyrimidine/purine nucleoside phosphorylase (104 aa).

It belongs to the nucleoside phosphorylase PpnP family.

The catalysed reaction is a purine D-ribonucleoside + phosphate = a purine nucleobase + alpha-D-ribose 1-phosphate. It carries out the reaction adenosine + phosphate = alpha-D-ribose 1-phosphate + adenine. The enzyme catalyses cytidine + phosphate = cytosine + alpha-D-ribose 1-phosphate. It catalyses the reaction guanosine + phosphate = alpha-D-ribose 1-phosphate + guanine. The catalysed reaction is inosine + phosphate = alpha-D-ribose 1-phosphate + hypoxanthine. It carries out the reaction thymidine + phosphate = 2-deoxy-alpha-D-ribose 1-phosphate + thymine. The enzyme catalyses uridine + phosphate = alpha-D-ribose 1-phosphate + uracil. It catalyses the reaction xanthosine + phosphate = alpha-D-ribose 1-phosphate + xanthine. In terms of biological role, catalyzes the phosphorolysis of diverse nucleosides, yielding D-ribose 1-phosphate and the respective free bases. Can use uridine, adenosine, guanosine, cytidine, thymidine, inosine and xanthosine as substrates. Also catalyzes the reverse reactions. This is Pyrimidine/purine nucleoside phosphorylase from Syntrophotalea carbinolica (strain DSM 2380 / NBRC 103641 / GraBd1) (Pelobacter carbinolicus).